The primary structure comprises 607 residues: Elongation factor 4 (607 aa).

The tr-type G domain maps to 11–193 (KKIRNFSIIA…QIVELVPPPT (183 aa)). GTP is bound by residues 23-28 (DHGKST) and 140-143 (NKID).

The protein belongs to the TRAFAC class translation factor GTPase superfamily. Classic translation factor GTPase family. LepA subfamily.

It localises to the cell membrane. The enzyme catalyses GTP + H2O = GDP + phosphate + H(+). Functionally, required for accurate and efficient protein synthesis under certain stress conditions. May act as a fidelity factor of the translation reaction, by catalyzing a one-codon backward translocation of tRNAs on improperly translocated ribosomes. Back-translocation proceeds from a post-translocation (POST) complex to a pre-translocation (PRE) complex, thus giving elongation factor G a second chance to translocate the tRNAs correctly. Binds to ribosomes in a GTP-dependent manner. This chain is Elongation factor 4, found in Exiguobacterium sp. (strain ATCC BAA-1283 / AT1b).